The chain runs to 822 residues: ATP-dependent zinc metalloprotease FTSH 7, chloroplastic (822 aa).

3 stretches are compositionally biased toward low complexity: residues 1 to 34 (MASA…RRAS), 80 to 94 (AEAS…SSSG), and 101 to 122 (AAAA…AAAT). Disordered stretches follow at residues 1–44 (MASA…ASVR) and 67–136 (PAAR…ENKW). A chloroplast-targeting transit peptide spans 1–70 (MASASAAAET…RVLRRPPAAR (70 aa)). The next 2 helical transmembrane spans lie at 154–174 (IVQG…IFAL) and 288–308 (GGLL…AVVL). Residue 386–393 (GLPGTGKT) coordinates ATP. Residue His-611 coordinates Zn(2+). Residue Glu-612 is part of the active site. 2 residues coordinate Zn(2+): His-615 and Asp-694.

This sequence in the N-terminal section; belongs to the AAA ATPase family. The protein in the C-terminal section; belongs to the peptidase M41 family. Requires Zn(2+) as cofactor.

The protein localises to the plastid. Its subcellular location is the chloroplast thylakoid membrane. Functionally, probable ATP-dependent zinc metallopeptidase. The protein is ATP-dependent zinc metalloprotease FTSH 7, chloroplastic (FTSH7) of Oryza sativa subsp. japonica (Rice).